The sequence spans 308 residues: Glutaminase (308 aa).

The substrate site is built by Ser66, Asn117, Glu161, Asn168, Tyr192, Tyr244, and Val262.

The protein belongs to the glutaminase family. In terms of assembly, homotetramer.

The catalysed reaction is L-glutamine + H2O = L-glutamate + NH4(+). This is Glutaminase from Salmonella agona (strain SL483).